Consider the following 385-residue polypeptide: ELAV-like protein 4 (385 aa).

Positions 12-48 (TMEPQVSNGPTSNTSNGPSSNNRNCPSPMQTGATTDD) are disordered. Residues 18–33 (SNGPTSNTSNGPSSNN) are compositionally biased toward low complexity. Residues 34-48 (RNCPSPMQTGATTDD) are compositionally biased toward polar residues. Serine 38 carries the phosphoserine modification. 2 RRM domains span residues 51-129 (TNLI…YARP) and 137-217 (ANLY…FANN). Residue serine 233 is modified to Phosphoserine. Asymmetric dimethylarginine; by CARM1; alternate is present on arginine 248. The residue at position 248 (arginine 248) is an Omega-N-methylarginine; by CARM1; alternate. Residues 302 to 380 (WCIFVYNLSP…RVLQVSFKTN (79 aa)) enclose the RRM 3 domain.

The protein belongs to the RRM elav family. In terms of assembly, component of a TAU mRNP complex, at least composed of IGF2BP1, ELAVL4 and G3BP. Associates with the EIF4F cap-binding complex, composed of EIF4G, EIF4A, EIF4E and PABP. Within the EIF4F cap-binding complex, interacts with EIF4A. Interacts with SMN (via Tudor domain) in an RNA-independent manner; the interaction is required for localization of ELAVL4 to RNA granules. Interacts with MAP1 light chain LC1 (via C-terminus); the interaction contributes to the association of ELAVL4 with microtubules. Interacts with MAP1 light chain LC2. Methylated by CARM1, which leads to reduced RNA-binding activity and enhanced interaction with SMN. Methylation at Arg-248 by CARM1 weakens protective binding to the 3'UTR of CDKN1A mRNA and down-regulates CDKN1A protein expression, thereby maintaining cells in a proliferative state. Methylation is inhibited by NGF, which facilitates neurite outgrowth. In terms of tissue distribution, expressed in pancreatic beta cells (at protein level). Expressed in the brain.

The protein resides in the cytoplasm. The protein localises to the perikaryon. It localises to the cell projection. It is found in the dendrite. Its subcellular location is the axon. The protein resides in the growth cone. Its function is as follows. RNA-binding protein that is involved in the post-transcriptional regulation of mRNAs. Plays a role in the regulation of mRNA stability, alternative splicing and translation. Binds to AU-rich element (ARE) sequences in the 3' untranslated region (UTR) of target mRNAs, including GAP43, VEGF, FOS, CDKN1A and ACHE mRNA. Many of the target mRNAs are coding for RNA-binding proteins, transcription factors and proteins involved in RNA processing and/or neuronal development and function. By binding to the mRNA 3'UTR, decreases mRNA deadenylation and thereby contributes to the stabilization of mRNA molecules and their protection from decay. Also binds to the polyadenylated (poly(A)) tail in the 3'UTR of mRNA, thereby increasing its affinity for mRNA binding. Mainly plays a role in neuron-specific RNA processing by stabilization of mRNAs such as GAP43, ACHE and mRNAs of other neuronal proteins, thereby contributing to the differentiation of neural progenitor cells, nervous system development, learning and memory mechanisms. Involved in the negative regulation of the proliferative activity of neuronal stem cells and in the positive regulation of neuronal differentiation of neural progenitor cells. Promotes neuronal differentiation of neural stem/progenitor cells in the adult subventricular zone of the hippocampus by binding to and stabilizing SATB1 mRNA. Binds and stabilizes MSI1 mRNA in neural stem cells. Exhibits increased binding to ACHE mRNA during neuronal differentiation, thereby stabilizing ACHE mRNA and enhancing its expression. Protects CDKN1A mRNA from decay by binding to its 3'-UTR. May bind to APP and BACE1 mRNAS and the BACE1AS lncRNA and enhance their stabilization. Plays a role in neurite outgrowth and in the establishment and maturation of dendritic arbors, thereby contributing to neocortical and hippocampal circuitry function. Stabilizes GAP43 mRNA and protects it from decay during postembryonic development in the brain. By promoting the stabilization of GAP43 mRNA, plays a role in NGF-mediated neurite outgrowth. Binds to BDNF long 3'UTR mRNA, thereby leading to its stabilization and increased dendritic translation after activation of PKC. By increasing translation of BDNF after nerve injury, may contribute to nerve regeneration. Acts as a stabilizing factor by binding to the 3'UTR of NOVA1 mRNA, thereby increasing its translation and enhancing its functional activity in neuron-specific splicing. Stimulates translation of mRNA in a poly(A)- and cap-dependent manner, possibly by associating with the EIF4F cap-binding complex. May also negatively regulate translation by binding to the 5'UTR of Ins2 mRNA, thereby repressing its translation. Upon glucose stimulation, Ins2 mRNA is released from ELAVL4 and translational inhibition is abolished. Also plays a role in the regulation of alternative splicing. May regulate alternative splicing of CALCA pre-mRNA into Calcitonin and Calcitonin gene-related peptide 1 (CGRP) by competing with splicing regulator TIAR for binding to U-rich intronic sequences of CALCA pre-mRNA. The polypeptide is ELAV-like protein 4 (ELAVL4) (Homo sapiens (Human)).